The chain runs to 119 residues: Large ribosomal subunit protein bL20 (119 aa).

It belongs to the bacterial ribosomal protein bL20 family.

Its function is as follows. Binds directly to 23S ribosomal RNA and is necessary for the in vitro assembly process of the 50S ribosomal subunit. It is not involved in the protein synthesizing functions of that subunit. This chain is Large ribosomal subunit protein bL20, found in Alcanivorax borkumensis (strain ATCC 700651 / DSM 11573 / NCIMB 13689 / SK2).